The sequence spans 137 residues: MATITASSSASLVARASLVHNSRVGVSSSPILGLPSMTKRSKVTCSIENKPSTTETTTTTNKSMGASLLAAAAAATISNPAMALVDERMSTEGTGLPFGLSNNLLGWILFGVFGLIWALYFVYASGLEEDEESGLSL.

The transit peptide at 1 to 64 (MATITASSSA…ETTTTTNKSM (64 aa)) directs the protein to the chloroplast. Residues 65-83 (GASLLAAAAAATISNPAMA) constitute a thylakoid transit peptide. At 84–103 (LVDERMSTEGTGLPFGLSNN) the chain is on the lumenal, thylakoid side. The helical transmembrane segment at 104 to 123 (LLGWILFGVFGLIWALYFVY) threads the bilayer. Topologically, residues 124 to 137 (ASGLEEDEESGLSL) are stromal.

In terms of assembly, part of the photosystem II complex. PSII is composed of 1 copy each of membrane proteins PsbA, PsbB, PsbC, PsbD, numerous small proteins, at least 3 peripheral proteins of the oxygen-evolving complex and a large number of cofactors. It forms dimeric complexes.

It localises to the plastid. The protein resides in the chloroplast thylakoid membrane. Its function is as follows. Stabilizes dimeric photosystem II (PSII). In its absence no dimeric PSII accumulates and there is a reduction of monomeric PSII. In Spinacia oleracea (Spinach), this protein is Photosystem II reaction center W protein, chloroplastic.